A 149-amino-acid polypeptide reads, in one-letter code: Large ribosomal subunit protein uL13 (149 aa).

This sequence belongs to the universal ribosomal protein uL13 family. In terms of assembly, part of the 50S ribosomal subunit.

Its function is as follows. This protein is one of the early assembly proteins of the 50S ribosomal subunit, although it is not seen to bind rRNA by itself. It is important during the early stages of 50S assembly. The polypeptide is Large ribosomal subunit protein uL13 (Borrelia turicatae (strain 91E135)).